A 246-amino-acid polypeptide reads, in one-letter code: YjeF N-terminal domain-containing 3 (246 aa).

In terms of domain architecture, YjeF N-terminal spans 24–234 (VATVETELLR…DIQKKYELNL (211 aa)).

In terms of assembly, interacts with apoa1a. Binds to high-density lipoprotein.

Accelerates cholesterol efflux from endothelial cells to high-density lipoprotein (HDL) and thereby regulates angiogenesis. Orchestrates hematopoietic stem and progenitor cell emergence from the hemogenic endothelium, a type of specialized endothelium manifesting hematopoietic potential. YJEFN3-mediated cholesterol efflux activates endothelial SREBF2, the master transcription factor for cholesterol biosynthesis, which in turn transactivates NOTCH and promotes hematopoietic stem and progenitor cell emergence. The polypeptide is YjeF N-terminal domain-containing 3 (Danio rerio (Zebrafish)).